Reading from the N-terminus, the 533-residue chain is NEDD8-activating enzyme E1 regulatory subunit (533 aa).

The segment at aspartate 330 to asparagine 343 is interaction with uba3.

This sequence belongs to the ubiquitin-activating E1 family. ULA1 subfamily. In terms of assembly, heterodimer of uba3 and nae1. The complex binds nedd8 and ube2m.

It participates in protein modification; protein neddylation. In terms of biological role, regulatory subunit of the dimeric uba3-nae1 E1 enzyme. E1 activates nedd8 by first adenylating its C-terminal glycine residue with ATP, thereafter linking this residue to the side chain of the catalytic cysteine, yielding a nedd8-uba3 thioester and free AMP. E1 finally transfers nedd8 to the catalytic cysteine of ube2m. The covalent attachment of nedd8 to target proteins is known as 'neddylation' and the process is involved in the regulation of cell growth, viability and development. The chain is NEDD8-activating enzyme E1 regulatory subunit (nae1) from Xenopus laevis (African clawed frog).